We begin with the raw amino-acid sequence, 1180 residues long: uncharacterized protein (1180 aa).

Disordered regions lie at residues Arg-229–Ile-280, Lys-431–Lys-465, Ser-484–Arg-575, Gly-730–Thr-758, Gly-810–Asp-986, Arg-1045–Met-1109, and Glu-1125–Glu-1152. The span at Gln-269–Ser-279 shows a compositional bias: acidic residues. Over residues Lys-431 to Ala-443 the composition is skewed to basic residues. Positions Asp-486 to Pro-497 are enriched in polar residues. Residues Ser-509–Ser-518 show a composition bias toward basic residues. Basic and acidic residues-rich tracts occupy residues Gly-730–Pro-745, Ser-826–Arg-837, and Thr-846–Lys-856. Residues Lys-872 to Gln-889 show a composition bias toward basic residues. Over residues Gln-937 to Met-959 the composition is skewed to polar residues. Composition is skewed to basic and acidic residues over residues Glu-960 to Asp-986, Arg-1045 to Glu-1106, and Leu-1127 to Glu-1152. The stretch at Leu-988–Arg-1171 forms a coiled coil.

This is an uncharacterized protein from Homo sapiens (Human).